A 226-amino-acid polypeptide reads, in one-letter code: Glutathione peroxidase 3 (226 aa).

An N-terminal signal peptide occupies residues Met1–Gly24. Sec73 is an active-site residue. Residue Sec73 is a non-standard amino acid, selenocysteine.

Belongs to the glutathione peroxidase family. In terms of assembly, homotetramer. Secreted in plasma.

It localises to the secreted. The enzyme catalyses 2 glutathione + H2O2 = glutathione disulfide + 2 H2O. The catalysed reaction is tert-butyl hydroperoxide + 2 glutathione = tert-butanol + glutathione disulfide + H2O. In terms of biological role, protects cells and enzymes from oxidative damage, by catalyzing the reduction of hydrogen peroxide, lipid peroxides and organic hydroperoxide, by glutathione. The polypeptide is Glutathione peroxidase 3 (Hylobates lar (Lar gibbon)).